The sequence spans 276 residues: Putative respiratory nitrate reductase heme subunit ORF7 (276 aa).

The heme b site is built by Met138 and Lys228.

Probable multiprotein complex; a catalytic heterodimer of an alpha and beta chain is proposed to associate with additional subunits involved in membrane attachment and electron transfer. Heme b serves as cofactor.

It is found in the cell membrane. The respiratory membrane-bound nitrate reductase enzyme complex plays a role in generation of metabolic energy by using nitrate as a terminal electron acceptor during anaerobic conditions. May transfer electrons to the iron-sulfur centers of the catalytic beta subunit. This Haloferax mediterranei (strain ATCC 33500 / DSM 1411 / JCM 8866 / NBRC 14739 / NCIMB 2177 / R-4) (Halobacterium mediterranei) protein is Putative respiratory nitrate reductase heme subunit ORF7.